The chain runs to 122 residues: Large ribosomal subunit protein uL14 (122 aa).

The protein belongs to the universal ribosomal protein uL14 family. Part of the 50S ribosomal subunit. Forms a cluster with proteins L3 and L19. In the 70S ribosome, L14 and L19 interact and together make contacts with the 16S rRNA in bridges B5 and B8.

Functionally, binds to 23S rRNA. Forms part of two intersubunit bridges in the 70S ribosome. This is Large ribosomal subunit protein uL14 from Syntrophus aciditrophicus (strain SB).